The chain runs to 125 residues: Large ribosomal subunit protein bL12 (125 aa).

This sequence belongs to the bacterial ribosomal protein bL12 family. Homodimer. Part of the ribosomal stalk of the 50S ribosomal subunit. Forms a multimeric L10(L12)X complex, where L10 forms an elongated spine to which 2 to 4 L12 dimers bind in a sequential fashion. Binds GTP-bound translation factors.

In terms of biological role, forms part of the ribosomal stalk which helps the ribosome interact with GTP-bound translation factors. Is thus essential for accurate translation. This Rhizobium leguminosarum bv. trifolii (strain WSM2304) protein is Large ribosomal subunit protein bL12.